A 702-amino-acid polypeptide reads, in one-letter code: Elongation factor G (702 aa).

The tr-type G domain occupies 8–290 (ERYRNIGISA…AVIEYLPAPT (283 aa)). Residues 17–24 (AHIDAGKT), 88–92 (DTPGH), and 142–145 (NKMD) contribute to the GTP site.

The protein belongs to the TRAFAC class translation factor GTPase superfamily. Classic translation factor GTPase family. EF-G/EF-2 subfamily.

Its subcellular location is the cytoplasm. Its function is as follows. Catalyzes the GTP-dependent ribosomal translocation step during translation elongation. During this step, the ribosome changes from the pre-translocational (PRE) to the post-translocational (POST) state as the newly formed A-site-bound peptidyl-tRNA and P-site-bound deacylated tRNA move to the P and E sites, respectively. Catalyzes the coordinated movement of the two tRNA molecules, the mRNA and conformational changes in the ribosome. The chain is Elongation factor G from Yersinia pseudotuberculosis serotype O:1b (strain IP 31758).